Here is an 86-residue protein sequence, read N- to C-terminus: Large ribosomal subunit protein bL31B (86 aa).

This sequence belongs to the bacterial ribosomal protein bL31 family. Type B subfamily. In terms of assembly, part of the 50S ribosomal subunit.

This Streptococcus agalactiae serotype III (strain NEM316) protein is Large ribosomal subunit protein bL31B.